The chain runs to 368 residues: Phospho-N-acetylmuramoyl-pentapeptide-transferase (368 aa).

A run of 9 helical transmembrane segments spans residues 23 to 43 (YLTF…IFAG), 72 to 92 (VPTM…FLWA), 98 to 118 (HVWL…IDDY), 139 to 159 (VTLG…SVLL), 170 to 190 (LSVD…TAVS), 201 to 221 (GLAA…AYLC), 238 to 258 (AGEV…FLWF), 281 to 301 (VIAL…VFFV), and 345 to 365 (KIVI…LMTL).

This sequence belongs to the glycosyltransferase 4 family. MraY subfamily. Mg(2+) serves as cofactor.

The protein localises to the cell inner membrane. The enzyme catalyses UDP-N-acetyl-alpha-D-muramoyl-L-alanyl-gamma-D-glutamyl-meso-2,6-diaminopimeloyl-D-alanyl-D-alanine + di-trans,octa-cis-undecaprenyl phosphate = di-trans,octa-cis-undecaprenyl diphospho-N-acetyl-alpha-D-muramoyl-L-alanyl-D-glutamyl-meso-2,6-diaminopimeloyl-D-alanyl-D-alanine + UMP. The protein operates within cell wall biogenesis; peptidoglycan biosynthesis. Functionally, catalyzes the initial step of the lipid cycle reactions in the biosynthesis of the cell wall peptidoglycan: transfers peptidoglycan precursor phospho-MurNAc-pentapeptide from UDP-MurNAc-pentapeptide onto the lipid carrier undecaprenyl phosphate, yielding undecaprenyl-pyrophosphoryl-MurNAc-pentapeptide, known as lipid I. This is Phospho-N-acetylmuramoyl-pentapeptide-transferase from Chlorobaculum tepidum (strain ATCC 49652 / DSM 12025 / NBRC 103806 / TLS) (Chlorobium tepidum).